A 317-amino-acid chain; its full sequence is Protoheme IX farnesyltransferase (317 aa).

9 consecutive transmembrane segments (helical) span residues 29 to 49, 53 to 73, 102 to 122, 123 to 143, 151 to 171, 179 to 199, 224 to 241, 245 to 267, and 283 to 303; these read LILLFLITTAAAMEVAGQGRV, LLLITLGSGTCAAAAANTINC, VFLAVLLAITAFSLLAAFANL, LSACLAMAGIAVYVGVYTHWL, IVIGGAAGAIPPLVGWAAVTG, VLFGMIFVWTPPHFWPLAMLI, IFLYTLALVPTSLLLVYP, VSWGYGVVAIALGSWFIYRAWQL, and FSILYMMLLCAAMVGDRLLLP.

This sequence belongs to the UbiA prenyltransferase family. Protoheme IX farnesyltransferase subfamily.

It is found in the cell inner membrane. The enzyme catalyses heme b + (2E,6E)-farnesyl diphosphate + H2O = Fe(II)-heme o + diphosphate. The protein operates within porphyrin-containing compound metabolism; heme O biosynthesis; heme O from protoheme: step 1/1. Functionally, converts heme B (protoheme IX) to heme O by substitution of the vinyl group on carbon 2 of heme B porphyrin ring with a hydroxyethyl farnesyl side group. The chain is Protoheme IX farnesyltransferase from Thermosynechococcus vestitus (strain NIES-2133 / IAM M-273 / BP-1).